A 257-amino-acid chain; its full sequence is Snake venom serine protease KN1 (257 aa).

The first 18 residues, 1–18, serve as a signal peptide directing secretion; sequence MVLIRVLANLLILQLSYA. Residues 19-24 constitute a propeptide that is removed on maturation; the sequence is QKSSEL. The 224-residue stretch at 25-248 folds into the Peptidase S1 domain; the sequence is VVGGHPCNIN…HLDWIKSIIA (224 aa). 5 disulfides stabilise this stretch: Cys31–Cys162, Cys49–Cys65, Cys141–Cys209, Cys173–Cys188, and Cys199–Cys224. His64 acts as the Charge relay system in catalysis. Asn102 carries N-linked (GlcNAc...) asparagine glycosylation. Asp109 serves as the catalytic Charge relay system. 2 N-linked (GlcNAc...) asparagine glycosylation sites follow: Asn120 and Asn121. Ser203 (charge relay system) is an active-site residue.

It belongs to the peptidase S1 family. Snake venom subfamily. In terms of assembly, monomer. Expressed by the venom gland.

It localises to the secreted. Functionally, snake venom serine protease that may act in the hemostasis system of the prey. The polypeptide is Snake venom serine protease KN1 (Trimeresurus stejnegeri (Chinese green tree viper)).